A 241-amino-acid chain; its full sequence is MAPK phosphothreonine lyase (241 aa).

H106 (proton donor) is an active-site residue. Catalysis depends on K136, which acts as the Proton acceptor.

Belongs to the phosphothreonine lyase family.

The protein resides in the secreted. In terms of biological role, secreted effector that irreversibly inactivates host MAP kinases by catalyzing the dephosphorylation of the phosphothreonine residue in the pT-X-pY motif present in MAPKs, via a beta-elimination reaction leading to a dehydrobutyrine residue. In Salmonella choleraesuis (strain SC-B67), this protein is MAPK phosphothreonine lyase (spvC).